A 110-amino-acid chain; its full sequence is UPF0060 membrane protein Mmwyl1_1139 (110 aa).

4 helical membrane passes run I7 to W27, T33 to L53, A63 to I83, and T87 to P107.

It belongs to the UPF0060 family.

Its subcellular location is the cell inner membrane. The polypeptide is UPF0060 membrane protein Mmwyl1_1139 (Marinomonas sp. (strain MWYL1)).